A 509-amino-acid polypeptide reads, in one-letter code: Maturase K (509 aa).

Belongs to the intron maturase 2 family. MatK subfamily.

The protein localises to the plastid. It is found in the chloroplast. Its function is as follows. Usually encoded in the trnK tRNA gene intron. Probably assists in splicing its own and other chloroplast group II introns. This is Maturase K from Clematis lasiantha (Pipestem clematis).